The chain runs to 532 residues: Flavin-containing monooxygenase 3 (532 aa).

FAD-binding positions include 9 to 13 (GAGVS), glutamate 32, 40 to 41 (LW), and 61 to 62 (NS). NADP(+) is bound by residues 60 to 61 (SN) and 195 to 198 (SGCD). Serine 401 carries the phosphoserine modification. The chain crosses the membrane as a helical span at residues 510–530 (FFFHWLKLFAIPILLIAVFLV).

It belongs to the FMO family. FAD is required as a cofactor.

The protein resides in the microsome membrane. It localises to the endoplasmic reticulum membrane. It catalyses the reaction trimethylamine + NADPH + O2 = trimethylamine N-oxide + NADP(+) + H2O. The enzyme catalyses N,N-dimethylaniline + NADPH + O2 + H(+) = N,N-dimethylaniline N-oxide + NADP(+) + H2O. The catalysed reaction is hypotaurine + NADPH + O2 + H(+) = taurine + NADP(+) + H2O. It carries out the reaction (S)-nicotine + NADPH + O2 = trans-(S)-nicotine N(1')-oxide + NADP(+) + H2O. It catalyses the reaction albendazole + NADPH + O2 + H(+) = albendazole S-oxide + NADP(+) + H2O. In terms of biological role, essential hepatic enzyme that catalyzes the oxygenation of a wide variety of nitrogen- and sulfur-containing compounds including drugs as well as dietary compounds. Plays an important role in the metabolism of trimethylamine (TMA), via the production of trimethylamine N-oxide (TMAO) metabolite. TMA is generated by the action of gut microbiota using dietary precursors such as choline, choline containing compounds, betaine or L-carnitine. By regulating TMAO concentration, FMO3 directly impacts both platelet responsiveness and rate of thrombus formation. This Pan troglodytes (Chimpanzee) protein is Flavin-containing monooxygenase 3 (FMO3).